The following is a 274-amino-acid chain: Acetylaranotin bis-thiomethyltransferase (274 aa).

This sequence belongs to the class I-like SAM-binding methyltransferase superfamily.

It participates in mycotoxin biosynthesis. Functionally, acetylaranotin bis-thiomethyltransferase involved in the biosynthesis of acetylaranotin derivatives, members of the epipolythiodioxopiperazine (ETP) class of toxins characterized by a disulfide-bridged cyclic dipeptide. The first step of acetylaranotin biosynthesis is performed by the NRPS ataP which produces diketopiperazine cyclo-L-Phe-L-Phe via the condensation of 2 phenylalanines (L-Phe). The ataC domain of ataTC then catalyzes the formation of bishydroxylation of cyclo-L-Phe-L-Phe. The glutathione S-transferase domain ataG in ataIMG further catalyzes the conjugation of two glutathiones to the bishydroxylated intermediate. Next, the dipeptidase ataJ removes the Glu residues. The following step is performed by the carbon sulfur lyase domain ataI of ataIMG which may convert the bis-cysteinyl adduct to yield an epidithiol intermediate. The ataT domain from ataTC then catalyzes the oxidation of the free dithiols, followed by a cyclization step catalyzed by the cytochrome P450 ataF. AtaF probably acts as an epoxidase to promote a dual epoxidation formation at C8 and C9 along with C8' and C9', followed by the spontaneous nucleophilic attack of the amide nitrogens N10 and N10' to yield an intermediate with the pyrrolidine partial structure. The final steps of acetylaranotin biosynthesis involve the acetylation and ring rearrangement of an epitetrathiodiketopiperazine intermediate to produce acetylaranotin. AtaH probably catalyzes the acetylation of epitetrathiodiketopiperazine to produce a diacetate and ataY is responsible for the formation of the dihydrooxepin moiety that converts the diacetate intermediate to acetylaranotin via acetylapoaranotin. Both enzymes could function independently in the absence of the other. The acetylaranotin bis-thiomethyltransferase ataS located outside of acetylaranotin gene cluster is the main thiomethyltransferase responsible for converting acetylaranotin and its related intermediates to their methylated forms. The chain is Acetylaranotin bis-thiomethyltransferase from Aspergillus terreus (strain NIH 2624 / FGSC A1156).